A 588-amino-acid chain; its full sequence is MASKKREVQLQTVINNQSLWDEMLQNKGLTVIDVYQAWCGPCRAMQPLFRKLKNELNEDEILHFAVAEADNIVTLQPFRDKCEPVFLFSVNGKIIEKIQGANAPLVNKKVINLIDEERKIAAGEMARPQYPEIPLVDSDSEVSEESPCESVQELYSIAIIKPDAVISKKVLEIKRKITKAGFIIEAEHKTVLTEEQVVNFYSRIADQCDFEEFVSFMTSGLSYILVVSQGSKHNPPSEETEPQTDTEPNERSEDQPEVEAQVTPGMMKNKQDSLQEYLERQHLAQLCDIEEDAANVAKFMDAFFPDFKKMKSMKLEKTLALLRPNLFHERKDDVLRIIKDEDFKILEQRQVVLSEKEAQALCKEYENEDYFNKLIENMTSGPSLALVLLRDNGLQYWKQLLGPRTVEEAIEYFPESLCAQFAMDSLPVNQLYGSDSLETAEREIQHFFPLQSTLGLIKPHATSEQREQILKIVKEAGFDLTQVKKMFLTPEQIEKIYPKVTGKDFYKDLLEMLSVGPSMVMILTKWNAVAEWRRLMGPTDPEEAKLLSPDSIRAQFGISKLKNIVHGASNAYEAKEVVNRLFEDPEEN.

Positions 2–119 (ASKKREVQLQ…VINLIDEERK (118 aa)) constitute a Thioredoxin domain. Cys39 and Cys42 are oxidised to a cystine. 3 NDK regions span residues 157–257 (IAII…DQPE), 315–455 (LEKT…STLG), and 456–588 (LIKP…PEEN). The segment at 230–261 (GSKHNPPSEETEPQTDTEPNERSEDQPEVEAQ) is disordered.

The protein in the C-terminal section; belongs to the NDK family. Monomer. As to expression, testis-specific. Expressed only in primary spermatocytes and round spermatids.

It localises to the cytoplasm. In terms of biological role, probably required during the final stages of sperm tail maturation in the testis and/or epididymis, where extensive disulfide bonding of fibrous sheath (FS) proteins occurs. In vitro, it has neither nucleoside diphosphate kinase (NDPK) activity nor reducing activity on disulfide bonds. Exhibits a 3'-5' exonuclease activity with a preference for single-stranded DNA, suggesting roles in DNA proofreading and repair. The chain is Thioredoxin domain-containing protein 3 from Homo sapiens (Human).